Reading from the N-terminus, the 557-residue chain is CCR4-NOT transcription complex subunit 6 (557 aa).

4 LRR repeats span residues 52–73, 75–96, 98–120, and 121–143; these read HLTA…IAKL, NLVY…LGNM, SLRE…GKLF, and QLQT…YQEP. The tract at residues 153–557 is nuclease domain; it reads LLDNLSGTAK…VNGIHLPGRR (405 aa). E240 provides a ligand contact to Mg(2+). The substrate site is built by E240, E276, H361, and P366. Mg(2+) is bound at residue D412. Residue D412 is the Proton donor/acceptor of the active site. The substrate site is built by N414, N481, and F486.

Belongs to the CCR4/nocturin family. As to quaternary structure, component of the CCR4-NOT complex; distinct complexes seem to exist that differ in the participation of probably mutually exclusive catalytic subunits; the complex contains two deadenylase subunits, CNOT6 or CNOT6L, and CNOT7 or CNOT8. Interacts with CNOT7 and CNOT8. Interacts with UNR. Interacts with ZFP36L1 (via N-terminus). Interacts with ZNF335. It depends on Mg(2+) as a cofactor.

Its subcellular location is the cytoplasm. The protein localises to the nucleus. It catalyses the reaction Exonucleolytic cleavage of poly(A) to 5'-AMP.. In terms of biological role, poly(A) nuclease with 3'-5' RNase activity. Catalytic component of the CCR4-NOT complex which is one of the major cellular mRNA deadenylases and is linked to various cellular processes including bulk mRNA degradation, miRNA-mediated repression, translational repression during translational initiation and general transcription regulation. Additional complex functions may be a consequence of its influence on mRNA expression. Involved in mRNA decay mediated by the major-protein-coding determinant of instability (mCRD) of the FOS gene in the cytoplasm. In the presence of ZNF335, enhances ligand-dependent transcriptional activity of nuclear hormone receptors, including RARA. The increase of ligand-dependent ESR1-mediated transcription is much smaller, if any. Mediates cell proliferation and cell survival and prevents cellular senescence. This chain is CCR4-NOT transcription complex subunit 6 (CNOT6), found in Homo sapiens (Human).